The following is a 387-amino-acid chain: uncharacterized protein (387 aa).

This sequence belongs to the geranylgeranyl reductase family. ChlP subfamily.

This is an uncharacterized protein from Methanosarcina barkeri (strain Fusaro / DSM 804).